The following is a 647-amino-acid chain: DNA mismatch repair protein MutL (647 aa).

The protein belongs to the DNA mismatch repair MutL/HexB family.

Functionally, this protein is involved in the repair of mismatches in DNA. It is required for dam-dependent methyl-directed DNA mismatch repair. May act as a 'molecular matchmaker', a protein that promotes the formation of a stable complex between two or more DNA-binding proteins in an ATP-dependent manner without itself being part of a final effector complex. This is DNA mismatch repair protein MutL from Bacillus cereus (strain ATCC 10987 / NRS 248).